The sequence spans 92 residues: Small ribosomal subunit protein uS19 (92 aa).

Belongs to the universal ribosomal protein uS19 family.

In terms of biological role, protein S19 forms a complex with S13 that binds strongly to the 16S ribosomal RNA. The polypeptide is Small ribosomal subunit protein uS19 (Neisseria gonorrhoeae (strain ATCC 700825 / FA 1090)).